Consider the following 347-residue polypeptide: Endophilin-A3 (347 aa).

The tract at residues Met-1–Ile-21 is membrane-binding amphipathic helix. The BAR domain maps to Ser-18–Lys-249. The tract at residues Pro-60 to Pro-87 is required for dimerization upon membrane association. The stretch at Glu-180–Met-201 forms a coiled coil. The interval Phe-218 to Glu-254 is interaction with ARC. The segment at Phe-255–Pro-288 is disordered. The span at Asn-261–Thr-281 shows a compositional bias: polar residues. One can recognise an SH3 domain in the interval Ala-285 to Pro-344.

The protein belongs to the endophilin family. In terms of assembly, interacts with ARC, DNM1, SGIP1, SYNJ1 and DYDC1. Interacts with FASLG. Interacts with ATXN2. Interacts with BIN2.

The protein resides in the cytoplasm. It localises to the early endosome membrane. Functionally, implicated in endocytosis. May recruit other proteins to membranes with high curvature. In Mus musculus (Mouse), this protein is Endophilin-A3 (Sh3gl3).